Reading from the N-terminus, the 464-residue chain is ERO1-like protein alpha (464 aa).

Positions 1-23 (MGRAWGLLVGLLGVVWLLRLGHG) are cleaved as a signal peptide. Intrachain disulfides connect Cys35/Cys48, Cys37/Cys46, Cys85/Cys387, Cys94/Cys99, Cys94/Cys130, Cys99/Cys104, Cys207/Cys237, and Cys390/Cys393. A phosphoserine mark is found at Ser106, Ser142, and Ser144. FAD is bound by residues Arg186, Thr188, and Trp199. Residues Ser248 and His251 each coordinate FAD. A glycan (N-linked (GlcNAc...) asparagine) is linked at Asn276. 2 residues coordinate FAD: Arg283 and Arg296. Asn380 carries an N-linked (GlcNAc...) asparagine glycan.

The protein belongs to the EROs family. As to quaternary structure, predominantly monomer. May function both as a monomer and a homodimer. Interacts with PDILT. Interacts with ERP44; the interaction results in retention of ERO1A in the endoplasmic reticulum. The cofactor is FAD. Post-translationally, N-glycosylated. The Cys-94/Cys-99 and Cys-390/Cys-393 disulfide bonds constitute the redox-active center. The Cys-94/Cys-99 disulfide bond may accept electron from P4HB and funnel them to the active site disulfide Cys-390/Cys-393. The regulatory Cys-99/Cys-104 disulfide bond stabilizes the other regulatory bond Cys-94/Cys-130. In terms of processing, phosphorylated on Ser-144 by FAM20C in the Golgi which increases its enzymatic activity. Phosphorylation is induced by lactation. It is also induced by hypoxia and reductive stress. Widely expressed (at protein level). In the mammary gland, expressed at higher levels in lactating mice than in virgin mice (at protein level).

It localises to the endoplasmic reticulum membrane. It is found in the golgi apparatus lumen. Its subcellular location is the secreted. The protein resides in the cell projection. The protein localises to the dendrite. With respect to regulation, enzyme activity is tightly regulated to prevent the accumulation of reactive oxygen species in the endoplasmic reticulum. Reversibly down-regulated by the formation of disulfide bonds between the active site Cys-94 and Cys-130, and between Cys-99 and Cys-104. Glutathione may be required to regulate its activity in the endoplasmic reticulum. Its function is as follows. Oxidoreductase involved in disulfide bond formation in the endoplasmic reticulum. Efficiently reoxidizes P4HB/PDI, the enzyme catalyzing protein disulfide formation, in order to allow P4HB to sustain additional rounds of disulfide formation. Following P4HB reoxidation, passes its electrons to molecular oxygen via FAD, leading to the production of reactive oxygen species (ROS) in the cell. Required for the proper folding of immunoglobulins. Plays an important role in ER stress-induced, CHOP-dependent apoptosis by activating the inositol 1,4,5-trisphosphate receptor IP3R1. The polypeptide is ERO1-like protein alpha (Mus musculus (Mouse)).